The primary structure comprises 565 residues: Periplasmic trehalase (565 aa).

Residues 1–30 (MKSPAPSRPQKMALIPACIFLCFAALSVQA) form the signal peptide. Substrate contacts are provided by residues Arg-152, 159–160 (WD), Asn-196, 205–207 (RSQ), 277–279 (RPE), and Gly-310. Active-site proton donor/acceptor residues include Asp-312 and Glu-496. Glu-511 contacts substrate. The disordered stretch occupies residues 540–565 (DNVPATHPTVKSATTQPSTKEAQPTP). Residues 548–565 (TVKSATTQPSTKEAQPTP) are compositionally biased toward polar residues.

This sequence belongs to the glycosyl hydrolase 37 family. In terms of assembly, monomer.

Its subcellular location is the periplasm. It carries out the reaction alpha,alpha-trehalose + H2O = alpha-D-glucose + beta-D-glucose. In terms of biological role, provides the cells with the ability to utilize trehalose at high osmolarity by splitting it into glucose molecules that can subsequently be taken up by the phosphotransferase-mediated uptake system. This chain is Periplasmic trehalase, found in Shigella flexneri.